The primary structure comprises 103 residues: Large ribosomal subunit protein uL24 (103 aa).

The protein belongs to the universal ribosomal protein uL24 family. In terms of assembly, part of the 50S ribosomal subunit.

One of two assembly initiator proteins, it binds directly to the 5'-end of the 23S rRNA, where it nucleates assembly of the 50S subunit. In terms of biological role, one of the proteins that surrounds the polypeptide exit tunnel on the outside of the subunit. This is Large ribosomal subunit protein uL24 from Brucella abortus (strain S19).